An 85-amino-acid polypeptide reads, in one-letter code: Cytochrome c6 (85 aa).

The heme c site is built by Cys-14, Cys-17, His-18, and Met-58.

It belongs to the cytochrome c family. PetJ subfamily. Monomer. Post-translationally, binds 1 heme c group covalently per subunit.

It localises to the plastid. Its subcellular location is the chloroplast thylakoid lumen. Functionally, functions as an electron carrier between membrane-bound cytochrome b6-f and photosystem I in oxygenic photosynthesis. This Pyropia tenera (Nori) protein is Cytochrome c6 (petJ).